We begin with the raw amino-acid sequence, 81 residues long: Beta-defensin 34 (81 aa).

A signal peptide spans 1–20 (MKTFLFLFAVLFFWSQPRMH). 3 cysteine pairs are disulfide-bonded: Cys28–Cys55, Cys35–Cys49, and Cys39–Cys56. Positions 62 to 72 (CGRSKGNQSDE) are enriched in polar residues. The disordered stretch occupies residues 62–81 (CGRSKGNQSDEGSGHMGTRG).

It belongs to the beta-defensin family. Only expressed in epididymis (caput, corpus and cauda).

The protein localises to the secreted. In terms of biological role, has antibacterial activity. The protein is Beta-defensin 34 (Defb34) of Mus musculus (Mouse).